A 423-amino-acid polypeptide reads, in one-letter code: Putative serpin-Z12 (423 aa).

The disordered stretch occupies residues 1–25 (MAALAAGEPFSGRATGGDGGVRSDV). The tract at residues 370 to 394 (GTVAAASTAVVMMQKGSSLPPVDFV) is RCL.

This sequence belongs to the serpin family.

Functionally, probable serine protease inhibitor. This chain is Putative serpin-Z12, found in Oryza sativa subsp. japonica (Rice).